A 680-amino-acid chain; its full sequence is Conserved oligomeric Golgi complex subunit 6 (680 aa).

The segment at 479–517 is disordered; that stretch reads HKSKKSGQLPRRSRTSSDSSQLTSVDALLSSSPSPPQNN.

This sequence belongs to the COG6 family. In terms of assembly, component of the conserved oligomeric Golgi complex which is composed of eight different subunits and is required for normal Golgi morphology and localization. Interacts with COG5, COG7 and COG8.

Its subcellular location is the golgi apparatus membrane. In terms of biological role, required for normal Golgi function. This chain is Conserved oligomeric Golgi complex subunit 6, found in Arabidopsis thaliana (Mouse-ear cress).